A 328-amino-acid polypeptide reads, in one-letter code: dITP/XTP pyrophosphatase (328 aa).

The interval 1–129 (MSEKIYEYKD…ATSEQGFGDI (129 aa)) is unknown. Positions 130–324 (ILIATRNEGK…KLMEVFPAWQ (195 aa)) are NTP pyrophosphatase. 134-139 (TRNEGK) is a substrate binding site. Catalysis depends on Asp-196, which acts as the Proton acceptor. Asp-196 lines the Mg(2+) pocket. Substrate-binding positions include Ser-197, 280 to 283 (FGYD), Lys-303, and 308 to 309 (HR).

This sequence belongs to the HAM1 NTPase family. Homodimer. Requires Mg(2+) as cofactor.

It carries out the reaction XTP + H2O = XMP + diphosphate + H(+). It catalyses the reaction dITP + H2O = dIMP + diphosphate + H(+). The enzyme catalyses ITP + H2O = IMP + diphosphate + H(+). In terms of biological role, pyrophosphatase that catalyzes the hydrolysis of nucleoside triphosphates to their monophosphate derivatives, with a high preference for the non-canonical purine nucleotides XTP (xanthosine triphosphate), dITP (deoxyinosine triphosphate) and ITP. Seems to function as a house-cleaning enzyme that removes non-canonical purine nucleotides from the nucleotide pool, thus preventing their incorporation into DNA/RNA and avoiding chromosomal lesions. This is dITP/XTP pyrophosphatase from Streptococcus pyogenes serotype M3 (strain ATCC BAA-595 / MGAS315).